The chain runs to 415 residues: Prostacyclin receptor (415 aa).

Residues 1 to 21 (MMASDGHPGPPSVTPGSPLSA) are disordered. The Extracellular portion of the chain corresponds to 1-44 (MMASDGHPGPPSVTPGSPLSAGGREWQGMAGSCWNITYVQDSVG). 2 cysteine pairs are disulfide-bonded: Cys33-Cys193 and Cys120-Cys198. Asn35 carries N-linked (GlcNAc...) asparagine glycosylation. The chain crosses the membrane as a helical span at residues 45–66 (PATSTLMFVAGVVGNGLALGIL). Residues 67–79 (GARRRSHPSAFAV) are Cytoplasmic-facing. The chain crosses the membrane as a helical span at residues 80 to 104 (LVTGLAVTDLLGTCFLSPAVFVAYA). Over 105–122 (RNSSLLGLAHGGTMLCDT) the chain is Extracellular. The chain crosses the membrane as a helical span at residues 123–143 (FAFAMTFFGLASTLILFAMAV). Residues 144-162 (ERCLALSHPYLYAQLDGPR) are Cytoplasmic-facing. A helical membrane pass occupies residues 163 to 186 (CARFALPSIYAFCCLFCSLPLLGL). Over 187–215 (GEHQQYCPGSWCFIRMRSAQPGGCAFSLA) the chain is Extracellular. Residues 216-236 (YASLMALLVTSIFFCNGSVTL) traverse the membrane as a helical segment. Residues 237-263 (SLYHMYRQQRRHHGSFVPTSRAREDEV) are Cytoplasmic-facing. A helical membrane pass occupies residues 264–288 (YHLILLALMTVIMAVCSLPLMIRGF). The Extracellular portion of the chain corresponds to 289–301 (TQAIAPDSREMGD). The helical transmembrane segment at 302-322 (LLAFRFNAFNPILDPWVFILF) threads the bilayer. Residues 323 to 415 (RKAVFQRLKF…SEAIAACSLC (93 aa)) lie on the Cytoplasmic side of the membrane. The disordered stretch occupies residues 349 to 370 (PLSRPASGRRDPPAPTSLQAKE). Ser365 carries the post-translational modification Phosphoserine. Cys412 carries the cysteine methyl ester modification. A lipid anchor (S-farnesyl cysteine) is attached at Cys412. Residues 413-415 (SLC) constitute a propeptide, removed in mature form.

It belongs to the G-protein coupled receptor 1 family. In terms of assembly, interacts (non-isoprenylated C-terminus) with PDZK1. Post-translationally, isoprenylation does not influence ligand binding but is required for efficient coupling to the effectors adenylyl cyclase and phospholipase C.

It is found in the cell membrane. Functionally, receptor for prostacyclin (prostaglandin I2 or PGI2). The activity of this receptor is mediated by G(s) proteins which activate adenylate cyclase. The chain is Prostacyclin receptor (Ptgir) from Mus musculus (Mouse).